Reading from the N-terminus, the 395-residue chain is MGIKHLYQLIEEHTPEAVKKGEIKNQFGRKVAIDASMSIYSFLIAVRSDGQQLMSETGETTSHLMGLFYRTMRMVDNGIKPLYVFDGAPPKLKSGELAKRFQRKTEAHAAAEEAKETGTAEDVEKFSRRTVRVTREHNEECQRLLKLMGIPYIVAPTEAEAQCAALARGGKVYAAASEDMDTLTFDTPILLRHLTFSEQRKEPILEIHLDKVLEGLQMERKQFIDLCILLGCDYLDPIKGIGPSTALKLIREHNDLEGVVEHIKSQSSKKLTIPDDWPFADARLLFLEPDVRPADDPECDFKWEAPDVEGLVKFLVEEKHFNEDRVRNGAAKLQKNMKTAQQSRLEGFFKPIEKTAEQKATLKRKADEKLEEKKKKQKVDAKAKKQAKAKPRTAG.

Residues 1 to 104 (MGIKHLYQLI…GELAKRFQRK (104 aa)) are N-domain. Residue aspartate 34 coordinates Mg(2+). Positions 47 and 70 each coordinate DNA. Residues aspartate 86, glutamate 158, glutamate 160, aspartate 179, and aspartate 181 each coordinate Mg(2+). Positions 122–253 (DVEKFSRRTV…STALKLIREH (132 aa)) are I-domain. Glutamate 158 contributes to the DNA binding site. 2 residues coordinate DNA: glycine 231 and aspartate 233. Aspartate 233 serves as a coordination point for Mg(2+). An interaction with PCNA region spans residues 341–349 (QQSRLEGFF). The disordered stretch occupies residues 359-395 (KATLKRKADEKLEEKKKKQKVDAKAKKQAKAKPRTAG). Residues 364 to 383 (RKADEKLEEKKKKQKVDAKA) show a composition bias toward basic and acidic residues. The span at 384 to 395 (KKQAKAKPRTAG) shows a compositional bias: basic residues.

This sequence belongs to the XPG/RAD2 endonuclease family. FEN1 subfamily. In terms of assembly, interacts with PCNA. Three molecules of fen1 bind to one PCNA trimer with each molecule binding to one PCNA monomer. PCNA stimulates the nuclease activity without altering cleavage specificity. Mg(2+) is required as a cofactor. In terms of processing, phosphorylated. Phosphorylation upon DNA damage induces relocalization to the nuclear plasma.

Its subcellular location is the nucleus. It is found in the nucleolus. It localises to the nucleoplasm. The protein resides in the mitochondrion. Structure-specific nuclease with 5'-flap endonuclease and 5'-3' exonuclease activities involved in DNA replication and repair. During DNA replication, cleaves the 5'-overhanging flap structure that is generated by displacement synthesis when DNA polymerase encounters the 5'-end of a downstream Okazaki fragment. It enters the flap from the 5'-end and then tracks to cleave the flap base, leaving a nick for ligation. Also involved in the long patch base excision repair (LP-BER) pathway, by cleaving within the apurinic/apyrimidinic (AP) site-terminated flap. Acts as a genome stabilization factor that prevents flaps from equilibrating into structures that lead to duplications and deletions. Also possesses 5'-3' exonuclease activity on nicked or gapped double-stranded DNA, and exhibits RNase H activity. Also involved in replication and repair of rDNA and in repairing mitochondrial DNA. This is Flap endonuclease 1 (fen1) from Pyrenophora tritici-repentis (strain Pt-1C-BFP) (Wheat tan spot fungus).